A 106-amino-acid chain; its full sequence is MLREECTPSSSWWEDVQHHHNDHANSISSTSFYHKSSNNNSHANASCEEDNLSVSTVRASNRLDLTAESSNHHSLSASNQPASSSDELLRDHVVSSHNHLWSLAFL.

Residues 24–35 (ANSISSTSFYHK) show a composition bias toward polar residues. Disordered regions lie at residues 24 to 49 (ANSI…SCEE) and 65 to 87 (LTAE…SSDE). Composition is skewed to low complexity over residues 36 to 46 (SSNNNSHANAS) and 74 to 85 (SLSASNQPASSS).

This is an uncharacterized protein from Arabidopsis thaliana (Mouse-ear cress).